The sequence spans 1499 residues: ABC multidrug transporter A-2 (1499 aa).

Disordered stretches follow at residues 1-66 (MAMQ…IDQE) and 80-107 (QISQ…NSDK). Residues 16–30 (ISSSAGQEVASTIRR) are compositionally biased toward polar residues. The segment covering 31 to 51 (QFTDADADRIVETPLGEKADS) has biased composition (basic and acidic residues). A compositionally biased stretch (polar residues) spans 80–94 (QISQKSAGPTNTFLD). Positions 166–415 (LRSILGCRNR…FIDMGFDCPD (250 aa)) constitute an ABC transporter 1 domain. A glycan (N-linked (GlcNAc...) asparagine) is linked at N339. The next 5 helical transmembrane spans lie at 526-546 (MTLA…SVFY), 561-581 (LLFF…LTLW), 606-626 (MIVD…ILYF), 635-655 (GHFF…SNIF), and 669-689 (MVPS…TIPV). A glycan (N-linked (GlcNAc...) asparagine) is linked at N763. The helical transmembrane segment at 778–798 (GIILGFFFFFLAAYIICSELV) threads the bilayer. Residues 857–1100 (FHWQDVCYDI…LIKYFENKGS (244 aa)) enclose the ABC transporter 2 domain. 893–900 (GVTGAGKT) provides a ligand contact to ATP. The next 5 membrane-spanning stretches (helical) occupy residues 1193–1213 (YIYS…FTFW), 1227–1247 (FAIF…MPYF), 1268–1288 (AFML…AVPA), 1317–1337 (LLIL…IAGI), and 1353–1373 (LCLI…FWIF). N1414 carries N-linked (GlcNAc...) asparagine glycosylation. Residues 1466–1486 (GLLFVYIVFNIFAAIFLYWLI) traverse the membrane as a helical segment.

Belongs to the ABC transporter superfamily. ABCG family. PDR (TC 3.A.1.205) subfamily.

The protein localises to the cell membrane. It carries out the reaction itraconazole(in) + ATP + H2O = itraconazole(out) + ADP + phosphate + H(+). The catalysed reaction is voriconazole(in) + ATP + H2O = voriconazole(out) + ADP + phosphate + H(+). Its activity is regulated as follows. The efflux inhibitor FK506 impairs the transport activity. In terms of biological role, pleiotropic ABC efflux transporter that confers resistance to structurally and functionally unrelated compounds including azoles such as itraconazole, posaconazole, and voriconazole. In Aspergillus fumigatus (strain ATCC MYA-4609 / CBS 101355 / FGSC A1100 / Af293) (Neosartorya fumigata), this protein is ABC multidrug transporter A-2.